Here is a 254-residue protein sequence, read N- to C-terminus: 3-deoxy-manno-octulosonate cytidylyltransferase (254 aa).

Belongs to the KdsB family.

Its subcellular location is the cytoplasm. It carries out the reaction 3-deoxy-alpha-D-manno-oct-2-ulosonate + CTP = CMP-3-deoxy-beta-D-manno-octulosonate + diphosphate. Its pathway is nucleotide-sugar biosynthesis; CMP-3-deoxy-D-manno-octulosonate biosynthesis; CMP-3-deoxy-D-manno-octulosonate from 3-deoxy-D-manno-octulosonate and CTP: step 1/1. It participates in bacterial outer membrane biogenesis; lipopolysaccharide biosynthesis. Functionally, activates KDO (a required 8-carbon sugar) for incorporation into bacterial lipopolysaccharide in Gram-negative bacteria. The protein is 3-deoxy-manno-octulosonate cytidylyltransferase of Pseudomonas aeruginosa (strain LESB58).